The chain runs to 487 residues: Glutamyl-tRNA(Gln) amidotransferase subunit A (487 aa).

Catalysis depends on charge relay system residues K79 and S158. S182 acts as the Acyl-ester intermediate in catalysis.

Belongs to the amidase family. GatA subfamily. As to quaternary structure, heterotrimer of A, B and C subunits.

The enzyme catalyses L-glutamyl-tRNA(Gln) + L-glutamine + ATP + H2O = L-glutaminyl-tRNA(Gln) + L-glutamate + ADP + phosphate + H(+). Its function is as follows. Allows the formation of correctly charged Gln-tRNA(Gln) through the transamidation of misacylated Glu-tRNA(Gln) in organisms which lack glutaminyl-tRNA synthetase. The reaction takes place in the presence of glutamine and ATP through an activated gamma-phospho-Glu-tRNA(Gln). This chain is Glutamyl-tRNA(Gln) amidotransferase subunit A, found in Ehrlichia ruminantium (strain Welgevonden).